Here is a 262-residue protein sequence, read N- to C-terminus: MTEELRLIQPNSREDANLSPVSKIEIYSFFDPFSKECFKLSAILSKLRIEYKQYISIRHILNPSLRVLTKCQAQSTSDLDNIALAYKAAELQGRIRAERFIHLVQNEIIPKRDIITESMVNSCISNAGLDYEVFKEDLNSSCLKESLQVDLHIAREMEIEEAPSLVFFNEDVHEEGLKVEGLYPYHIYTYIINELIGSTIEKELPPSLEDYIQQQQLVTKEELLTIYEWPEKLMNKELKKLALQQKIEKLKSPDGKFWKAKN.

The protein belongs to the SpxH family. In terms of assembly, interacts with Spx.

It localises to the cytoplasm. Functionally, adapter protein required for efficient degradation of Spx by ClpXP under non-stress conditions. Interaction with Spx stabilizes Spx and exposes the C-terminus of Spx for recognition and proteolysis by ClpXP. This is ClpXP adapter protein SpxH from Staphylococcus saprophyticus subsp. saprophyticus (strain ATCC 15305 / DSM 20229 / NCIMB 8711 / NCTC 7292 / S-41).